A 231-amino-acid chain; its full sequence is Axial regulator YABBY 4 (231 aa).

Residues 26-53 (CGFCTTILLVSVPFTSLSMVVTVRCGHC) form a C4-type zinc finger. Disordered stretches follow at residues 98-120 (KVNQ…EDED) and 211-231 (NNGF…SPFE).

Belongs to the YABBY family. As to quaternary structure, interacts with SPL/NZZ.

The protein resides in the nucleus. Functionally, essential for the formation and the abaxial-adaxial asymmetric growth of the ovule outer integument. The sequence is that of Axial regulator YABBY 4 (YAB4) from Arabidopsis thaliana (Mouse-ear cress).